Consider the following 293-residue polypeptide: uncharacterized protein (293 aa).

The HTH lysR-type domain occupies 1–60; the sequence is MHITLRQLEVFAEVLKSGSTTQASVMLALSQSAVSAALTDLEGQLGVQLFDRVGKRLVVN. The H-T-H motif DNA-binding region spans 20-39; the sequence is TTQASVMLALSQSAVSAALT.

Belongs to the LysR transcriptional regulatory family.

This is an uncharacterized protein from Escherichia coli O157:H7.